A 497-amino-acid polypeptide reads, in one-letter code: MTPPENKNLVDENKELIQEVLKAYPEKSRKKREKHLNVHEENKSDCGVKSNIKSVPGVMTARGCAYAGSKGVVWGPIKDMIHISHGPVGCGYWSWSGRRNYYVGVTGINSFGTMHFTSDFQERDIVFGGDKKLTKLIEELDVLFPLNRGVSIQSECPIGLIGDDIEAVAKKTSKQIGKPVVPLRCEGFRGVSQSLGHHIANDAIRDWIFPEYDKLKKENRLDFEPSPYDVALIGDYNIGGDAWASRMLLEEMGLRVVAQWSGDGTLNELIQGPAAKLVLIHCYRSMNYICRSLEEQYGMPWMEFNFFGPTKIAASLREIAAKFDSKIQENAEKVIAKYTPVMNAVLDKYRPRLEGNTVMLYVGGLRPRHVVPAFEDLGIKVVGTGYEFAHNDDYKRTTHYIDNATIIYDDVTAYEFEEFVKAKKPDLIASGIKEKYVFQKMGLPFRQMHSWDYSGPYHGYDGFAIFARDMDLALNSPTWSLIGAPWKKAAAKAKAAA.

Residues Cys64, Cys90, and Cys156 each coordinate [8Fe-7S] cluster. Residues Cys282 and His449 each coordinate [7Fe-Mo-9S-C-homocitryl] cluster.

This sequence belongs to the NifD/NifK/NifE/NifN family. Tetramer of two alpha and two beta chains. Forms complex with the iron protein (nitrogenase component 2). [8Fe-7S] cluster is required as a cofactor. Requires [7Fe-Mo-9S-C-homocitryl] cluster as cofactor.

It carries out the reaction N2 + 8 reduced [2Fe-2S]-[ferredoxin] + 16 ATP + 16 H2O = H2 + 8 oxidized [2Fe-2S]-[ferredoxin] + 2 NH4(+) + 16 ADP + 16 phosphate + 6 H(+). Functionally, this molybdenum-iron protein is part of the nitrogenase complex that catalyzes the key enzymatic reactions in nitrogen fixation. The sequence is that of Nitrogenase molybdenum-iron protein alpha chain (nifD) from Nostoc sp. (strain PCC 7120 / SAG 25.82 / UTEX 2576).